The primary structure comprises 264 residues: Regulatory protein RecX (264 aa).

The protein belongs to the RecX family.

The protein resides in the cytoplasm. Negatively modulates RecA activity. In Bacillus subtilis (strain 168), this protein is Regulatory protein RecX.